The primary structure comprises 956 residues: MEQTNETVQDVQDVQVAGVNEANQVTQNVEPSLISLEKSIFATHSVGRVGILLIDASNSVTFNKINDKIVFDKMVEIVKNLPESEFRCIFWNSDNNRFIDSKSSKFKNGVQVFPSVFKKETINQIFTIVKSSIDEHCLTWPHLSFNAIPDSWINNTDPINIYFITDGEMGHRNIGVEEMMSLKMNLKNSIQKIFDKFNSIRLNIITLEPIVRDFTQMESLRSAAGCDVYNVIMENQMTRYITKFTSYTPDNTNGFVHISRNIPPPGYVPFGDKYFSEIHKNEFVKYILRLVKSTSNEDDLLKIVQNLSTTVSVLTKDKPPQTIRQTVKIFSDLFQKSTLDITLVNYLLEEAVEKETSGSANIFAAYKTKLKDLYKQADELLQTNVSKAIGVNETFLSVLVGNKIISGHARMIDQDTKINGKMWKNSCIDINGVRLPVLPFDTSNQSHMNEQCLRQWMRLLVTRLYNVNTMDDMAIYSVLMMMVRVVASDIDDNVKQAYRKLATIMLKKKRANSDTTELDRLEDGQLPIPNNGKIESFYSYMTKVSANLNLHVSSMTQWYIICLALNNDKLILRQLIHCKDHIEKDFPGIKPSELFDLVKKQIEPVNFVKIPVEYSLDYQCLVTLEDVSNKGGFKFLPHNSLTGDICRPIYVLSEEGQAGLIADPNTSICPICYAQLTHKDFEKVGPKVQQEELNVFTDSSEYKNLFGLNQSIQTITSSASPVISTFTTTANPSTQGFPGFDGRNVVLNKKGTLVIMKGTVGAGKSSISLLIKQEVENNGGHCFVEGTDKYCKTGLSTVEAIQEIKLSLSKINLITDDKPIVVVIDTCGERNNGDVAFDVKFTGWNKINVFVNHIRSEMNGYLAWTLRNVLRRTKPTDSDNHFLNPESAGLKVCMDVHRNKATALFGKKIPVLFSSTPNSINEAIEKLNEAADAYQAIIDQQKPLTDQVKLVIDKIF.

Positions asparagine 918–lysine 942 form a coiled coil.

This is an uncharacterized protein from Acanthamoeba polyphaga (Amoeba).